Consider the following 120-residue polypeptide: Large ribosomal subunit protein uL18 (120 aa).

It belongs to the universal ribosomal protein uL18 family. Part of the 50S ribosomal subunit; part of the 5S rRNA/L5/L18/L25 subcomplex. Contacts the 5S and 23S rRNAs.

In terms of biological role, this is one of the proteins that bind and probably mediate the attachment of the 5S RNA into the large ribosomal subunit, where it forms part of the central protuberance. The sequence is that of Large ribosomal subunit protein uL18 from Agrobacterium fabrum (strain C58 / ATCC 33970) (Agrobacterium tumefaciens (strain C58)).